Here is an 827-residue protein sequence, read N- to C-terminus: Thymine dioxygenase JBP1 (827 aa).

Residues 62 to 264 (QIIGVVLREA…RLTCVFYYRA (203 aa)) form a thymine dioxygenase region. The Fe cation site is built by H189, D191, and H239. Residue R255 participates in 2-oxoglutarate binding. 2 disordered regions span residues 364 to 383 (PLRGEDEKVKANGDSTPRPL) and 539 to 568 (PEEKKRRMERKQRIEEARRHGMPSGSHEKR). Residues 392–561 (TNLMVSTAVE…IEEARRHGMP (170 aa)) form a DNA-binding JBP1 domain region. Basic and acidic residues predominate over residues 539–557 (PEEKKRRMERKQRIEEARR).

This sequence belongs to the TET family. JBP1 subfamily. As to quaternary structure, monomer. Binds to DNA as a monomer. It depends on Fe(2+) as a cofactor.

It localises to the nucleus. The enzyme catalyses thymine + 2-oxoglutarate + O2 = 5-hydroxymethyluracil + succinate + CO2. In terms of biological role, dioxygenase that catalyzes the first step of DNA base J (beta-d-glucosyl-HOMedU) biosynthesis by converting thymine to 5-hydroxymethyluracil (HOMedU). DNA base J is a hypermodified thymidine residue found in the genome of kinetoplastid parasites, which is localized primarily to repetitive DNA, namely the telomeres, and is implicated in the regulation of antigenic variation. Also specifically binds to base J-containing DNA (J-DNA). Involved in propagation and maintenance of DNA base J synthesis initiated by JBP2 by specifically binding already synthesized DNA base J and propagating J synthesis. Thymine dioxygenase activity and J-DNA-binding are independent functions. The polypeptide is Thymine dioxygenase JBP1 (JBP1) (Leishmania tarentolae (Sauroleishmania tarentolae)).